The chain runs to 420 residues: UDP-N-acetylglucosamine 1-carboxyvinyltransferase (420 aa).

Position 22–23 (22–23 (KN)) interacts with phosphoenolpyruvate. Arginine 93 contacts UDP-N-acetyl-alpha-D-glucosamine. The active-site Proton donor is cysteine 117. Position 117 is a 2-(S-cysteinyl)pyruvic acid O-phosphothioketal (cysteine 117). UDP-N-acetyl-alpha-D-glucosamine is bound by residues 162 to 165 (KVSV), aspartate 307, and isoleucine 329.

The protein belongs to the EPSP synthase family. MurA subfamily.

The protein localises to the cytoplasm. The catalysed reaction is phosphoenolpyruvate + UDP-N-acetyl-alpha-D-glucosamine = UDP-N-acetyl-3-O-(1-carboxyvinyl)-alpha-D-glucosamine + phosphate. It functions in the pathway cell wall biogenesis; peptidoglycan biosynthesis. Cell wall formation. Adds enolpyruvyl to UDP-N-acetylglucosamine. The sequence is that of UDP-N-acetylglucosamine 1-carboxyvinyltransferase from Actinobacillus succinogenes (strain ATCC 55618 / DSM 22257 / CCUG 43843 / 130Z).